The chain runs to 351 residues: Foldase protein PrsA 1 (351 aa).

Positions 1–22 (MKNSNKLIASVVTLASVMALAA) are cleaved as a signal peptide. A lipid anchor (N-palmitoyl cysteine) is attached at Cys-23. Cys-23 is lipidated: S-diacylglycerol cysteine. A PpiC domain is found at 145-240 (TPTMAVEMIT…KKFYIVKVTK (96 aa)). 2 stretches are compositionally biased toward low complexity: residues 303-317 (KTKAASESSTTSESS) and 326-351 (ESEQTQTSSAEEPTETEAQTQEPAAQ). Positions 303 to 351 (KTKAASESSTTSESSKAAEENPSESEQTQTSSAEEPTETEAQTQEPAAQ) are disordered.

This sequence belongs to the PrsA family.

The protein localises to the cell membrane. It catalyses the reaction [protein]-peptidylproline (omega=180) = [protein]-peptidylproline (omega=0). In terms of biological role, plays a major role in protein secretion by helping the post-translocational extracellular folding of several secreted proteins. This Streptococcus pyogenes serotype M1 protein is Foldase protein PrsA 1 (prsA1).